The sequence spans 357 residues: MSRPTRLVIEPSALLHNLSQIKHLAPGKKVIAMVKANAYGCGVREVAPVLDGRIEAFGVACLEEALAIRALGVETPCILFQGVFSSDELSVAVENDFACVLHHAKQLEWLIKTPLPYPIKVWVKVNTGMHRLGFKIHELQKVMDALQTCTWVDKNIGLMTHLACADEPHRPENQQQISLFQEISIPGFRQRSIANSAAIISFPDSQADVVRPGIMLYGVSPFANQNARDLGLIPVMRFMSAISAIHDNPSFAQVGYGGTWKSDKPSRIGIVAAGYGDGYPRHISEKTPVWVRGREVSIVGRVSMDMLTIDLTEHPDVEIGDEVELWGTHVLVERIAKSAGTIGYELLCQISERVRYK.

Lysine 35 serves as the catalytic Proton acceptor; specific for D-alanine. Lysine 35 bears the N6-(pyridoxal phosphate)lysine mark. Residue arginine 131 participates in substrate binding. Tyrosine 256 serves as the catalytic Proton acceptor; specific for L-alanine. Methionine 304 lines the substrate pocket.

Belongs to the alanine racemase family. It depends on pyridoxal 5'-phosphate as a cofactor.

The enzyme catalyses L-alanine = D-alanine. It functions in the pathway amino-acid biosynthesis; D-alanine biosynthesis; D-alanine from L-alanine: step 1/1. Its function is as follows. Catalyzes the interconversion of L-alanine and D-alanine. May also act on other amino acids. In Legionella pneumophila (strain Lens), this protein is Alanine racemase (alr).